A 408-amino-acid chain; its full sequence is LL-diaminopimelate aminotransferase (408 aa).

Residues Tyr-15 and Gly-42 each coordinate substrate. Pyridoxal 5'-phosphate contacts are provided by residues Tyr-72, Ser-108–Lys-109, Tyr-132, Asn-187, Tyr-218, and Ser-246–Ser-248. Substrate contacts are provided by Lys-109, Tyr-132, and Asn-187. An N6-(pyridoxal phosphate)lysine modification is found at Lys-249. Positions 257 and 292 each coordinate pyridoxal 5'-phosphate. The substrate site is built by Asn-292 and Arg-388.

It belongs to the class-I pyridoxal-phosphate-dependent aminotransferase family. LL-diaminopimelate aminotransferase subfamily. Homodimer. Pyridoxal 5'-phosphate is required as a cofactor.

The catalysed reaction is (2S,6S)-2,6-diaminopimelate + 2-oxoglutarate = (S)-2,3,4,5-tetrahydrodipicolinate + L-glutamate + H2O + H(+). It functions in the pathway amino-acid biosynthesis; L-lysine biosynthesis via DAP pathway; LL-2,6-diaminopimelate from (S)-tetrahydrodipicolinate (aminotransferase route): step 1/1. Involved in the synthesis of meso-diaminopimelate (m-DAP or DL-DAP), required for both lysine and peptidoglycan biosynthesis. Catalyzes the direct conversion of tetrahydrodipicolinate to LL-diaminopimelate. This is LL-diaminopimelate aminotransferase from Synechococcus sp. (strain CC9902).